The primary structure comprises 350 residues: Chorismate synthase (350 aa).

NADP(+) is bound at residue Arg-48. FMN is bound by residues Arg-125–Ser-127, Gly-277, Lys-292–Ser-296, and Arg-318.

Belongs to the chorismate synthase family. As to quaternary structure, homotetramer. The cofactor is FMNH2.

It carries out the reaction 5-O-(1-carboxyvinyl)-3-phosphoshikimate = chorismate + phosphate. The protein operates within metabolic intermediate biosynthesis; chorismate biosynthesis; chorismate from D-erythrose 4-phosphate and phosphoenolpyruvate: step 7/7. In terms of biological role, catalyzes the anti-1,4-elimination of the C-3 phosphate and the C-6 proR hydrogen from 5-enolpyruvylshikimate-3-phosphate (EPSP) to yield chorismate, which is the branch point compound that serves as the starting substrate for the three terminal pathways of aromatic amino acid biosynthesis. This reaction introduces a second double bond into the aromatic ring system. In Maridesulfovibrio salexigens (strain ATCC 14822 / DSM 2638 / NCIMB 8403 / VKM B-1763) (Desulfovibrio salexigens), this protein is Chorismate synthase.